The chain runs to 438 residues: 26S proteasome regulatory subunit 7 homolog (438 aa).

A compositionally biased stretch (basic and acidic residues) spans 1-15 (MPPKEDWEKYQKPVD). The tract at residues 1-31 (MPPKEDWEKYQKPVDTEEENDKNPPPLDEGD) is disordered. S90 carries the post-translational modification Phosphoserine. 220-227 (GPPGTGKT) contributes to the ATP binding site.

This sequence belongs to the AAA ATPase family.

Its subcellular location is the cytoplasm. It is found in the nucleus. Functionally, the 26S proteasome is involved in the ATP-dependent degradation of ubiquitinated proteins. The regulatory (or ATPase) complex confers ATP dependency and substrate specificity to the 26S complex. The polypeptide is 26S proteasome regulatory subunit 7 homolog (rpt1) (Schizosaccharomyces pombe (strain 972 / ATCC 24843) (Fission yeast)).